Reading from the N-terminus, the 80-residue chain is MAVGISPGELRELTEEELTERLRESKEELFNLRFQMATGQLNNNRRLRTVRQEIARVYTVLRERELGLAAGPGEPDGKES.

It belongs to the universal ribosomal protein uL29 family.

The protein is Large ribosomal subunit protein uL29 of Mycobacterium marinum (strain ATCC BAA-535 / M).